The primary structure comprises 76 residues: Protein A9 homolog (76 aa).

A signal peptide spans 1-21 (MSCYSSILNSISTLAFLQVAS). The Intravirion segment spans residues 23 to 45 (VIELVRHCIMHFCETRIRCNTLA). The chain crosses the membrane as a helical span at residues 46 to 66 (FVILKILITMVIYFMIGLGLF). Residues 67–76 (YLAKNGTEAE) lie on the Virion surface side of the membrane. An N-linked (GlcNAc...) asparagine; by host glycan is attached at Asn-71.

This sequence belongs to the chordopoxvirinae A9 family.

The protein localises to the virion membrane. It localises to the host cytoplasm. Functionally, envelope protein. Required for an early step in virion morphogenesis. The chain is Protein A9 homolog from Fowlpox virus (strain NVSL) (FPV).